A 276-amino-acid chain; its full sequence is MSWWQVIVLAAAQGLTEFLPVSSSGHLAIVSRIFFSGDAGASFTAVSQLGTEAAVVIYFARDIVRILSAWVHGLVVKAHRNTDYRLGWYVIIGTIPICILGLFFKDDIRSGVRNLWVVVTALVVFSGVIALAEYVGRQSRHIERLTWRDAVVVGIAQTLALVPGVSRSGSTISAGLFLGLDRELAARFGFLLAIPAVFASGLFSLPDAFHPVTEGMSATGPQLLVATLIAFVLGLTAVAWLLRFLVRHNMYWFVGYRVLVGTGMLVLLATGTVAAT.

5 helical membrane-spanning segments follow: residues 84-104 (YRLG…GLFF), 115-135 (LWVV…AEYV), 188-208 (FGFL…LPDA), 222-242 (QLLV…AWLL), and 250-270 (MYWF…LLAT).

The protein belongs to the UppP family.

It is found in the cell membrane. It carries out the reaction di-trans,octa-cis-undecaprenyl diphosphate + H2O = di-trans,octa-cis-undecaprenyl phosphate + phosphate + H(+). Catalyzes the dephosphorylation of undecaprenyl diphosphate (UPP). Confers resistance to bacitracin. This chain is Undecaprenyl-diphosphatase, found in Mycobacterium bovis (strain ATCC BAA-935 / AF2122/97).